The primary structure comprises 215 residues: Protein-L-isoaspartate O-methyltransferase (215 aa).

Ser-62 is a catalytic residue.

The protein belongs to the methyltransferase superfamily. L-isoaspartyl/D-aspartyl protein methyltransferase family.

It localises to the cytoplasm. The catalysed reaction is [protein]-L-isoaspartate + S-adenosyl-L-methionine = [protein]-L-isoaspartate alpha-methyl ester + S-adenosyl-L-homocysteine. Its function is as follows. Catalyzes the methyl esterification of L-isoaspartyl residues in peptides and proteins that result from spontaneous decomposition of normal L-aspartyl and L-asparaginyl residues. It plays a role in the repair and/or degradation of damaged proteins. This is Protein-L-isoaspartate O-methyltransferase from Ruegeria sp. (strain TM1040) (Silicibacter sp.).